Here is a 359-residue protein sequence, read N- to C-terminus: Heat-inducible transcription repressor HrcA (359 aa).

Belongs to the HrcA family.

Its function is as follows. Negative regulator of class I heat shock genes (grpE-dnaK-dnaJ and groELS operons). Prevents heat-shock induction of these operons. The protein is Heat-inducible transcription repressor HrcA of Sinorhizobium medicae (strain WSM419) (Ensifer medicae).